Reading from the N-terminus, the 88-residue chain is Small ribosomal subunit protein bS18 (88 aa).

Residues Met1–Val22 form a disordered region.

It belongs to the bacterial ribosomal protein bS18 family. Part of the 30S ribosomal subunit. Forms a tight heterodimer with protein bS6.

Binds as a heterodimer with protein bS6 to the central domain of the 16S rRNA, where it helps stabilize the platform of the 30S subunit. This Thermus thermophilus protein is Small ribosomal subunit protein bS18 (rpsR).